We begin with the raw amino-acid sequence, 972 residues long: MATRGHVQDPNDRRLRPIYDYLDNGNNKMAIQQADKLLKKHKDLHCAKVLKAIGLQRTGKQEEAFTLAQEVAALEPTDDNSLQALTILYREMHRPELVTKLYEAAVKKVPNSEEYHSHLFMAYARVGEYKKMQQAGMALYKIVPKNPYYFWSVMSLIMQSISARDENLSKTMFLPLAERMVEKMVKEDKIEAEAEVELYYMILERLGKYQEALDVIRGKLGEKLTSEIQSRENKCMAMYKKLSKWPECNALSRRLLLKNSDDWQFYLTYFDSVFRLIEEAWTPPAEGEHSLEGEVHCSAEDAVKFIEDRITEASQSSRHVRGPHLAKLELIRRLRSQGCNDEYKLGDPEELMFQYFKKFGDKPCCFTDLKVFVDLLPAAQCTQFINQLLGVVPLSTPTEDKLALPADIRGLQQHLCVVQLTRLLGLYHSMDKSQKLDVVKELMLRYQHGLEFGRSCLKTELQFSDYYCLLAVHVLIDVWREAGEETAVWQALTLLEEGLTHSPSNAQFKLLLVRIYCVLGAFEPVVDLYSSLDAKHIQHDTIGYLLTRYAASLGQYAAASQSCNFALRFFHSNQKDTSEYIIQAYKYGAFEKIPEFIAFRNRLNNSLHFAQVRTERMLLDLLLEANISISLAESIKSMNLRPEEDDVPWEDLRDNRDLDVFFSWDPKDRNVSEEHKKLSLEEETMWLRIRSLTLRLISGLPSLTHPVEPKNSEKMSENGVSSRIDILRLLLQQLEVAVETGKRFIEKEIQYPFLGPVPTRMGRFFSSGCCQCQVQSFHLVSDMYELDTSGLEGTVDIQERIENSLASLLELLKGVFSTCKGDLLEVTDGNVKTQPAVLENLVFFVETISVILWVSSYCESVLRPYKLNIQKKKKKKKETSIIMPPIFTSFQDYVTGLQTVISNAVDHIKGLEAHLIALRLEELTLEETSISTEERKFSKTVQGKVQSSYLHSLLETGELLRKRLETTKKLKI.

4 TPR repeats span residues 11–44, 45–78, 79–112, and 114–146; these read NDRR…HKDL, HCAK…EPTD, DNSL…VPNS, and EYHS…VPKN.

The protein belongs to the MDM20/NAA25 family. Component of the N-terminal acetyltransferase B (NatB) complex which is composed of NAA20 and NAA25.

Its subcellular location is the cytoplasm. Functionally, non-catalytic subunit of the NatB complex which catalyzes acetylation of the N-terminal methionine residues of peptides beginning with Met-Asp, Met-Glu, Met-Asn and Met-Gln. May play a role in normal cell-cycle progression. The protein is N-alpha-acetyltransferase 25, NatB auxiliary subunit (Naa25) of Mus musculus (Mouse).